Reading from the N-terminus, the 648-residue chain is Solute carrier family 23 member 2 (648 aa).

The segment at 1–21 (MMGIGKNTASKSVEAGGSTEG) is disordered. The Cytoplasmic portion of the chain corresponds to 9–110 (ASKSVEAGGS…LCIFLGLQHY (102 aa)). At Ser70 the chain carries Phosphoserine. Thr75 is subject to Phosphothreonine. Ser78 is modified (phosphoserine). Thr79 bears the Phosphothreonine mark. Ser81 carries the post-translational modification Phosphoserine. Residues 111-131 (LTCFSGTIAVPFLLADAMCVG) form a helical membrane-spanning segment. At 132 to 139 (DDQWATSQ) the chain is on the extracellular side. Residues 140–160 (LIGTIFFCVGITTLLQTTFGC) form a helical membrane-spanning segment. Arg161 is a topological domain (cytoplasmic). The chain crosses the membrane as a helical span at residues 162–182 (LPLFQASAFAFLAPARAILSL). The Extracellular segment spans residues 183–216 (DKWKCNTTEITVANGTAELLEHIWHPRIQEIQGA). N-linked (GlcNAc...) asparagine glycosylation is found at Asn188 and Asn196. Residues 217–237 (IIMSSLIEVVIGLLGLPGALL) form a helical membrane-spanning segment. The Cytoplasmic segment spans residues 238 to 264 (RYIGPLTITPTVALIGLSGFQAAGERA). A helical membrane pass occupies residues 265-282 (GKHWGIAMLTIFLVLLFS). Residues 283 to 286 (QYAR) are Extracellular-facing. Residues 287 to 300 (NVKFPLPIYKSKKG) constitute an intramembrane region (helical). Over 301–307 (WTAYKFQ) the chain is Extracellular. The chain crosses the membrane as a helical span at residues 308–328 (LFKMFPIILAILVSWLLCFIF). At 329–369 (TVTDVFPSNSTDYGYYARTDARKGVLLVAPWFKVPYPFQWG) the chain is on the cytoplasmic side. Residues 370 to 390 (MPTVSAAGVIGMLSAVVASII) form a helical membrane-spanning segment. The Extracellular portion of the chain corresponds to 391-415 (ESIGDYYACARLSCAPPPPIHAINR). The chain crosses the membrane as a helical span at residues 416 to 436 (GIFVEGLSCVLDGIFGTGNGS). Over 437 to 459 (TSSSPNIGVLGITKVGSRRVIQY) the chain is Cytoplasmic. Residues 460–480 (GAALMLGLGMVGKFSALFASL) form a helical membrane-spanning segment. Topologically, residues 481-483 (PDP) are extracellular. Residues 484-504 (VLGALFCTLFGMITAVGLSNL) form a helical membrane-spanning segment. The Cytoplasmic portion of the chain corresponds to 505-514 (QFIDLNSSRN). The helical transmembrane segment at 515–535 (LFVLGFSIFFGLVLPSYLRQN) threads the bilayer. Residues 536–545 (PLVTGITGID) are Extracellular-facing. A helical transmembrane segment spans residues 546 to 566 (QILNVLLTTAMFVGGCVAFIL). Topologically, residues 567-648 (DNTIPGTPEE…SSDKDSQATV (82 aa)) are cytoplasmic. Thr647 carries the post-translational modification Phosphothreonine.

The protein belongs to the nucleobase:cation symporter-2 (NCS2) (TC 2.A.40) family. As to quaternary structure, interacts with CLSTN3. In terms of processing, phosphorylated. As to expression, expressed in metabolically active and specialized tissues, including high expression in brain and adrenals. Detected in a wide range of tissues. Expression in kidney is almost undetectable.

Its subcellular location is the cell membrane. The enzyme catalyses L-ascorbate(out) + 2 Na(+)(out) = L-ascorbate(in) + 2 Na(+)(in). In terms of biological role, sodium/ascorbate cotransporter. Mediates electrogenic uptake of vitamin C, with a stoichiometry of 2 Na(+) for each ascorbate. The sequence is that of Solute carrier family 23 member 2 (Slc23a2) from Mus musculus (Mouse).